Here is a 154-residue protein sequence, read N- to C-terminus: UPF0756 membrane protein CKR_1028 (154 aa).

A run of 4 helical transmembrane segments spans residues 5 to 25 (IILI…VALA), 48 to 68 (NGLF…IADG), 82 to 102 (WLGI…GLGM), and 113 to 133 (IMPA…GVPV).

Belongs to the UPF0756 family.

Its subcellular location is the cell membrane. In Clostridium kluyveri (strain NBRC 12016), this protein is UPF0756 membrane protein CKR_1028.